The sequence spans 124 residues: Small ribosomal subunit protein uS12 (124 aa).

D89 is modified (3-methylthioaspartic acid). The interval 105–124 (QGVKNRKQARSRYGAKKEKS) is disordered. A compositionally biased stretch (basic residues) spans 108–118 (KNRKQARSRYG).

It belongs to the universal ribosomal protein uS12 family. As to quaternary structure, part of the 30S ribosomal subunit. Contacts proteins S8 and S17. May interact with IF1 in the 30S initiation complex.

Functionally, with S4 and S5 plays an important role in translational accuracy. In terms of biological role, interacts with and stabilizes bases of the 16S rRNA that are involved in tRNA selection in the A site and with the mRNA backbone. Located at the interface of the 30S and 50S subunits, it traverses the body of the 30S subunit contacting proteins on the other side and probably holding the rRNA structure together. The combined cluster of proteins S8, S12 and S17 appears to hold together the shoulder and platform of the 30S subunit. The polypeptide is Small ribosomal subunit protein uS12 (Mycobacterium leprae (strain Br4923)).